The sequence spans 40 residues: Probable non-specific lipid-transfer protein (40 aa).

It belongs to the plant LTP family. In terms of processing, phosphorylated by Ca(2+)-dependent protein kinase.

Its function is as follows. Plant non-specific lipid-transfer proteins transfer phospholipids as well as galactolipids across membranes. May play a role in wax or cutin deposition in the cell walls of expanding epidermal cells and certain secretory tissues. This is Probable non-specific lipid-transfer protein from Triticum aestivum (Wheat).